A 224-amino-acid chain; its full sequence is Adenylate kinase (224 aa).

An ATP-binding site is contributed by 10–15 (GSGKST). Residues 30-59 (ASGDIIRAEINKGNALGREMKKYIEKGDLL) are NMP. Residues S31, R36, 57–59 (DLL), 83–86 (GYPR), and Q90 each bind AMP. Positions 124-161 (GRRICRQCGAVYHIKYNPSKVPGKCDICGGEVIQREDD) are LID. R125 lines the ATP pocket. Residues C128 and C131 each contribute to the Zn(2+) site. Position 134–135 (134–135 (VY)) interacts with ATP. The Zn(2+) site is built by C148 and C151. Residues R158 and R169 each coordinate AMP. ATP is bound at residue G197.

The protein belongs to the adenylate kinase family. Monomer.

It localises to the cytoplasm. It carries out the reaction AMP + ATP = 2 ADP. It participates in purine metabolism; AMP biosynthesis via salvage pathway; AMP from ADP: step 1/1. In terms of biological role, catalyzes the reversible transfer of the terminal phosphate group between ATP and AMP. Plays an important role in cellular energy homeostasis and in adenine nucleotide metabolism. The protein is Adenylate kinase of Thermococcus sibiricus (strain DSM 12597 / MM 739).